The sequence spans 545 residues: CTP synthase (545 aa).

Residues 1–266 (MTTKYIFVTG…DQLVVDRFGL (266 aa)) are amidoligase domain. S14 serves as a coordination point for CTP. Residue S14 coordinates UTP. ATP is bound by residues 15-20 (SLGKGI) and D72. Mg(2+) is bound by residues D72 and E140. CTP-binding positions include 147-149 (DIE), 187-192 (KTKPTQ), and K223. UTP contacts are provided by residues 187 to 192 (KTKPTQ) and K223. 239 to 241 (KDV) is an ATP binding site. The region spanning 291–542 (TIGMVGKYVS…IQAAGEYMKR (252 aa)) is the Glutamine amidotransferase type-1 domain. Residue G352 coordinates L-glutamine. C379 (nucleophile; for glutamine hydrolysis) is an active-site residue. L-glutamine is bound by residues 380 to 383 (LGMQ), E403, and R470. Residues H515 and E517 contribute to the active site.

The protein belongs to the CTP synthase family. In terms of assembly, homotetramer.

The enzyme catalyses UTP + L-glutamine + ATP + H2O = CTP + L-glutamate + ADP + phosphate + 2 H(+). The catalysed reaction is L-glutamine + H2O = L-glutamate + NH4(+). It catalyses the reaction UTP + NH4(+) + ATP = CTP + ADP + phosphate + 2 H(+). It functions in the pathway pyrimidine metabolism; CTP biosynthesis via de novo pathway; CTP from UDP: step 2/2. With respect to regulation, allosterically activated by GTP, when glutamine is the substrate; GTP has no effect on the reaction when ammonia is the substrate. The allosteric effector GTP functions by stabilizing the protein conformation that binds the tetrahedral intermediate(s) formed during glutamine hydrolysis. Inhibited by the product CTP, via allosteric rather than competitive inhibition. Its function is as follows. Catalyzes the ATP-dependent amination of UTP to CTP with either L-glutamine or ammonia as the source of nitrogen. Regulates intracellular CTP levels through interactions with the four ribonucleotide triphosphates. The chain is CTP synthase from Tolumonas auensis (strain DSM 9187 / NBRC 110442 / TA 4).